The sequence spans 1393 residues: Rab3 GTPase-activating protein non-catalytic subunit (1393 aa).

The interval 36 to 67 (RDPSKSTDWEDDGWGAWEENEPQEPEEEGNTC) is disordered. Ser-39 is modified (phosphoserine). Over residues 44–64 (WEDDGWGAWEENEPQEPEEEG) the composition is skewed to acidic residues. A Phosphoserine modification is found at Ser-450. A Phosphothreonine modification is found at Thr-901. Residues Ser-916 and Ser-978 each carry the phosphoserine modification.

Belongs to the Rab3-GAP regulatory subunit family. As to quaternary structure, the Rab3 GTPase-activating complex is a heterodimer composed of RAB3GAP1 and RAB3GAP2. The Rab3 GTPase-activating complex interacts with DMXL2. Interacts with LMAN1. Ubiquitous.

It is found in the cytoplasm. It localises to the endoplasmic reticulum. Its function is as follows. Regulatory subunit of the Rab3 GTPase-activating (Rab3GAP) complex composed of RAB3GAP1 and RAB3GAP2, which has GTPase-activating protein (GAP) activity towards various Rab3 subfamily members (RAB3A, RAB3B, RAB3C and RAB3D), RAB5A and RAB43, and guanine nucleotide exchange factor (GEF) activity towards RAB18. As part of the Rab3GAP complex, acts as a GAP for Rab3 proteins by converting active RAB3-GTP to the inactive form RAB3-GDP. Rab3 proteins are involved in regulated exocytosis of neurotransmitters and hormones. The Rab3GAP complex acts as a GEF for RAB18 by promoting the conversion of inactive RAB18-GDP to the active form RAB18-GTP. Recruits and stabilizes RAB18 at the cis-Golgi membrane in human fibroblasts where RAB18 is most likely activated. Also involved in RAB18 recruitment at the endoplasmic reticulum (ER) membrane where it maintains proper ER structure. Required for normal eye and brain development. May participate in neurodevelopmental processes such as proliferation, migration and differentiation before synapse formation, and non-synaptic vesicular release of neurotransmitters. The sequence is that of Rab3 GTPase-activating protein non-catalytic subunit from Homo sapiens (Human).